The primary structure comprises 146 residues: 3-dehydroquinate dehydratase (146 aa).

The active-site Proton acceptor is tyrosine 23. Substrate is bound by residues asparagine 74, histidine 80, and aspartate 87. Catalysis depends on histidine 100, which acts as the Proton donor. Residues 101–102 and arginine 111 contribute to the substrate site; that span reads IS.

The protein belongs to the type-II 3-dehydroquinase family. Homododecamer.

The enzyme catalyses 3-dehydroquinate = 3-dehydroshikimate + H2O. It functions in the pathway metabolic intermediate biosynthesis; chorismate biosynthesis; chorismate from D-erythrose 4-phosphate and phosphoenolpyruvate: step 3/7. Catalyzes a trans-dehydration via an enolate intermediate. This Bacillus cereus (strain ATCC 10987 / NRS 248) protein is 3-dehydroquinate dehydratase.